Reading from the N-terminus, the 851-residue chain is Internalin J (851 aa).

Positions 1–25 are cleaved as a signal peptide; the sequence is MKTTKIVIASLVSLTMVSNPLLTFA. LRR repeat units follow at residues 94-115, 116-136, 137-157, 158-179, 180-200, 201-221, 222-243, 244-263, 264-284, 285-306, 316-325, 338-357, 359-368, and 380-402; these read TLTS…EKLT, GLTK…SQNT, NLTY…TPLT, KLTY…QNPL, LTYL…HNTQ, LTEL…TPQT, QLTT…QNKL, LNRL…NQNI, QLTF…TPLT, QLTY…TLSK, DLLEIDLTHN, KIKE…DCQA, GITELDLSQN, and ELTE…NAHI. 4 consecutive MucBP domains span residues 506–568, 576–638, 647–709, and 717–779; these read PIKG…SQSV, IVAA…AQTV, APEK…SQTV, and IEAA…AQTV. The interval 786–825 is disordered; the sequence is NTNTDQPLPTKKPTNTTPTKPSNLKTTEVKKASDTLPKTG. Residues 792 to 811 show a composition bias toward low complexity; the sequence is PLPTKKPTNTTPTKPSNLKT. An LPXTG sorting signal motif is present at residues 821–825; the sequence is LPKTG. At T824 the chain carries Pentaglycyl murein peptidoglycan amidated threonine. A propeptide spans 825-851 (removed by sortase A); sequence GDSAPWKSALLGVFLSSTALVIWKKKK.

It belongs to the internalin family. As to quaternary structure, nearly full-length mature protein and an internal LRR-containing fragment interact in vitro with human intestinal mucin-2 (MUC2) but not with mucin-1. LRR fragment binding is slightly better at pH 5.5, (the pH of the intestine) than at pH 7.4.

The protein resides in the secreted. It is found in the cell wall. With respect to regulation, despite being transcribed during bacterial growth in culture the protein is only detected in infected mice. In terms of biological role, involved in several steps of L.monocytogenes infection by both intravenous and oral infection. Probably acts as an adhesion; upon ectopic expression in L.innocula bacteria adhere better to human cell lines. The polypeptide is Internalin J (inlJ) (Listeria monocytogenes serovar 1/2a (strain ATCC BAA-679 / EGD-e)).